The chain runs to 56 residues: Prokaryotic ubiquitin-like protein UBact (56 aa).

Residues 1–28 (MPQDQQRKKQFDPNPNRDDSQRKTPVDK) show a composition bias toward basic and acidic residues. Residues 1-33 (MPQDQQRKKQFDPNPNRDDSQRKTPVDKEIDDI) are disordered. Deamidated glutamine is present on Q56. Q56 participates in a covalent cross-link: Isoglutamyl lysine isopeptide (Gln-Lys) (interchain with K-? in acceptor proteins).

The protein belongs to the ubiquitin-like protein UBact family. In terms of processing, may be modified by deamidation of its C-terminal glutamine to glutamate by the adjacently encoded deamidase. This could be a prerequisite to the subsequent conjugation, as shown in the other prokaryotic ubiquitin-like protein Pup.

Functionally, may function as a protein modifier covalently attached to lysine residues of substrate proteins. This may serve to target the modified proteins for degradation by proteasomes. This chain is Prokaryotic ubiquitin-like protein UBact, found in Yanofskybacteria sp. (strain GW2011_GWA1_39_13).